The primary structure comprises 122 residues: Protein FLORAL ORGAN NUMBER2 (122 aa).

Residues 1–25 (MGRLFLCLVVAWCWVALLLVAPVHG) form the signal peptide. The tract at residues 28 to 122 (GLPGEFSGDQ…PEHARSTGRP (95 aa)) is disordered. A compositionally biased stretch (basic residues) spans 54–63 (KQPRGVKGTR). The segment covering 64–77 (RPSWSSWSSTASRS) has biased composition (low complexity). A compositionally biased stretch (basic and acidic residues) spans 111-122 (RRPEHARSTGRP).

The protein belongs to the CLV3/ESR signal peptide family.

The protein resides in the secreted. Its function is as follows. Probable extracellular signal that regulates meristem maintenance. May function as a putative ligand for a receptor complex including FON1. Regulates the size of the floral meristem and the number of floral organs. The sequence is that of Protein FLORAL ORGAN NUMBER2 (FON2) from Oryza sativa subsp. indica (Rice).